The chain runs to 63 residues: Synergistic-type venom protein C9S3, chain 2 (63 aa).

3 disulfides stabilise this stretch: Cys-3–Cys-24, Cys-17–Cys-42, and Cys-46–Cys-57.

It belongs to the three-finger toxin family. Short-chain subfamily. Aminergic toxin sub-subfamily. As to quaternary structure, heterodimer of C9S3 chain 1 (AC P01408) and chain 2, linked by at least two disulfide bonds. In terms of tissue distribution, expressed by the venom gland.

It localises to the secreted. In terms of biological role, this protein shows a synergetic toxic effect in that it enhances the toxicity of other D.angusticeps toxins. The sequence is that of Synergistic-type venom protein C9S3, chain 2 from Dendroaspis angusticeps (Eastern green mamba).